The following is a 248-amino-acid chain: UPF0736 protein BCB4264_A1231 (248 aa).

The protein belongs to the UPF0736 family.

The protein is UPF0736 protein BCB4264_A1231 of Bacillus cereus (strain B4264).